Consider the following 158-residue polypeptide: Chromobox protein homolog 7 (158 aa).

The Chromo domain maps to 11 to 69 (FAVESIRKKRVRKGKVEYLVKWKGWPPKYSTWEPEEHILDPRLVMAYEEKEEKDRASGY). Residues 60-124 (KEEKDRASGY…PPPWTPMLPS (65 aa)) form a disordered region. Over residues 68-78 (GYRKRGPKPKR) the composition is skewed to basic residues.

As to quaternary structure, component of a PRC1-like complex. Distinct PRC1-like core complexes are composed of a RING1 subunit (RING1B or RING1A), one of the six PCGF proteins (PCGF1-6), one PHC protein (PHC1-3) and one of the CBX proteins (CBX2, CBX4, CBX6, CBX7 or CBX8). The composition of the PRC1 complex may differ between the PRC1 complex in pluripotent embryonic stem cells containing RNF2, CBX7 and PCGF2, and the PRC1 complex in differentiating cells containing RNF2, CBX2, CBX4 and BMI1. Interacts with RING1. Interacts with RNF2/RING1B. Interacts with PCGF1, PCGF2, PCGF3, PCGF5 and PCGF6. Interacts (via chromodomain) with histone H3K9Me3 and H3K27me3. Interacts with H3K9Me2 and H4K20Me1. Interacts (via chromodomain) with single-stranded and double-stranded RNA; RNA binding seems to be required for the localization to chromatin.

It is found in the nucleus. The protein localises to the chromosome. In terms of biological role, component of a Polycomb group (PcG) multiprotein PRC1-like complex, a complex class required to maintain the transcriptionally repressive state of many genes, including Hox genes, throughout development. PcG PRC1 complex acts via chromatin remodeling and modification of histones; it mediates monoubiquitination of histone H2A 'Lys-119', rendering chromatin heritably changed in its expressibility. Promotes histone H3 trimethylation at 'Lys-9' (H3K9me3). Binds to histone H3 trimethylated 'Lys-9' (H3K9me3) or at 'Lys-27' (H3K27me3). May possibly also bind trimethylated lysine residues in other proteins (in vitro). Binds non-coding, single-stranded and double-stranded RNA. Plays a role in the timely repression of differentiation-specific genes in pluripotent embryonic stem cells to maintain the undifferentiated state. Regulator of cellular lifespan by maintaining the repression of CDKN2A, but not by inducing telomerase activity. The polypeptide is Chromobox protein homolog 7 (Cbx7) (Rattus norvegicus (Rat)).